A 181-amino-acid polypeptide reads, in one-letter code: Cyclic AMP-dependent transcription factor ATF-3 (181 aa).

A disordered region spans residues 73-97 (EMSVTKSEAAPEEDERKRRRRERNK). Lysine 78 participates in a covalent cross-link: Glycyl lysine isopeptide (Lys-Gly) (interchain with G-Cter in SUMO2). A bZIP domain is found at 86-149 (DERKRRRRER…QHLIYMLNLH (64 aa)). Residues 88 to 110 (RKRRRRERNKIAAAKCRNKKKEK) form a basic motif region. The interval 114-142 (LQKESEKLESVNAELKAQIEELKNEKQHL) is leucine-zipper. Threonine 162 carries the phosphothreonine modification. Lysine 175 is covalently cross-linked (Glycyl lysine isopeptide (Lys-Gly) (interchain with G-Cter in SUMO2)).

Belongs to the bZIP family. ATF subfamily. Binds DNA as a homodimer or a heterodimer. Interacts with KAT5; promoting KAT5 autoacetylation and KAT5 deubiquitination by USP7.

The protein resides in the nucleus. In terms of biological role, this protein binds the cAMP response element (CRE) (consensus: 5'-GTGACGT[AC][AG]-3'), a sequence present in many viral and cellular promoters. Represses transcription from promoters with ATF sites. It may repress transcription by stabilizing the binding of inhibitory cofactors at the promoter. This Mus musculus (Mouse) protein is Cyclic AMP-dependent transcription factor ATF-3.